A 109-amino-acid polypeptide reads, in one-letter code: Cell division protein ZapA (109 aa).

Positions 21–99 (PDQRDALNQA…IEQALLEQGR (79 aa)) form a coiled coil.

It belongs to the ZapA family. Type 1 subfamily. As to quaternary structure, homodimer. Interacts with FtsZ.

The protein resides in the cytoplasm. Activator of cell division through the inhibition of FtsZ GTPase activity, therefore promoting FtsZ assembly into bundles of protofilaments necessary for the formation of the division Z ring. It is recruited early at mid-cell but it is not essential for cell division. The chain is Cell division protein ZapA from Shigella boydii serotype 18 (strain CDC 3083-94 / BS512).